A 466-amino-acid polypeptide reads, in one-letter code: Glutamate decarboxylase alpha (466 aa).

Residues threonine 62 and asparagine 83 each coordinate substrate. Pyridoxal 5'-phosphate is bound by residues 126 to 127, threonine 212, and histidine 275; that span reads SS. Residue lysine 276 is modified to N6-(pyridoxal phosphate)lysine.

It belongs to the group II decarboxylase family. As to quaternary structure, homohexamer. It depends on pyridoxal 5'-phosphate as a cofactor.

The catalysed reaction is L-glutamate + H(+) = 4-aminobutanoate + CO2. Functionally, converts glutamate to gamma-aminobutyrate (GABA), consuming one intracellular proton in the reaction. The gad system helps to maintain a near-neutral intracellular pH when cells are exposed to extremely acidic conditions. The ability to survive transit through the acidic conditions of the stomach is essential for successful colonization of the mammalian host by commensal and pathogenic bacteria. The sequence is that of Glutamate decarboxylase alpha (gadA) from Escherichia coli O6:H1 (strain CFT073 / ATCC 700928 / UPEC).